The primary structure comprises 173 residues: Probable lipoprotein EnvE (173 aa).

The first 20 residues, 1–20, serve as a signal peptide directing secretion; sequence MTLLSGKTTLVLCLSSILCG. A lipid anchor (N-palmitoyl cysteine) is attached at Cys21. A lipid anchor (S-diacylglycerol cysteine) is attached at Cys21.

The protein resides in the cell membrane. The protein is Probable lipoprotein EnvE (envE) of Salmonella typhimurium (strain LT2 / SGSC1412 / ATCC 700720).